The chain runs to 364 residues: Spermidine/putrescine import ATP-binding protein PotA (364 aa).

One can recognise an ABC transporter domain in the interval 5 to 235 (LSFKDVSKGF…PVNRFVADFI (231 aa)). ATP is bound at residue 37 to 44 (GPSGCGKT).

The protein belongs to the ABC transporter superfamily. Spermidine/putrescine importer (TC 3.A.1.11.1) family. In terms of assembly, the complex is composed of two ATP-binding proteins (PotA), two transmembrane proteins (PotB and PotC) and a solute-binding protein (PotD).

Its subcellular location is the cell membrane. It carries out the reaction ATP + H2O + polyamine-[polyamine-binding protein]Side 1 = ADP + phosphate + polyamineSide 2 + [polyamine-binding protein]Side 1.. Its function is as follows. Part of the ABC transporter complex PotABCD involved in spermidine/putrescine import. Responsible for energy coupling to the transport system. This is Spermidine/putrescine import ATP-binding protein PotA from Staphylococcus epidermidis (strain ATCC 12228 / FDA PCI 1200).